The chain runs to 74 residues: Homeobox protein Hox-B8 (74 aa).

The span at Tyr1–Pro24 shows a compositional bias: low complexity. A disordered region spans residues Tyr1–Phe28. Residues Leu27–Arg32 carry the Antp-type hexapeptide motif. Residues Arg39–Arg74 constitute a DNA-binding region (homeobox).

The protein belongs to the Antp homeobox family.

Its subcellular location is the nucleus. Sequence-specific transcription factor which is part of a developmental regulatory system that provides cells with specific positional identities on the anterior-posterior axis. This Gallus gallus (Chicken) protein is Homeobox protein Hox-B8 (HOXB8).